The primary structure comprises 158 residues: Transcription elongation factor GreA (158 aa).

The protein belongs to the GreA/GreB family.

Necessary for efficient RNA polymerase transcription elongation past template-encoded arresting sites. The arresting sites in DNA have the property of trapping a certain fraction of elongating RNA polymerases that pass through, resulting in locked ternary complexes. Cleavage of the nascent transcript by cleavage factors such as GreA or GreB allows the resumption of elongation from the new 3'terminus. GreA releases sequences of 2 to 3 nucleotides. This is Transcription elongation factor GreA from Hamiltonella defensa subsp. Acyrthosiphon pisum (strain 5AT).